The chain runs to 345 residues: NADPH dehydrogenase (345 aa).

Ser-23–Cys-26 contributes to the FMN binding site. Tyr-28 contacts substrate. Ala-60 and Gln-102 together coordinate FMN. His-164 to His-167 lines the substrate pocket. Residues Arg-215 and Gly-307–Arg-308 each bind FMN.

It belongs to the NADH:flavin oxidoreductase/NADH oxidase family. NamA subfamily. As to quaternary structure, homotetramer. FMN is required as a cofactor.

The enzyme catalyses A + NADPH + H(+) = AH2 + NADP(+). Catalyzes the reduction of the double bond of an array of alpha,beta-unsaturated aldehydes and ketones. It also reduces the nitro group of nitroester and nitroaromatic compounds. It could have a role in detoxification processes. This is NADPH dehydrogenase from Bacillus cereus (strain B4264).